The sequence spans 184 residues: ATP synthase subunit delta (184 aa).

Belongs to the ATPase delta chain family. F-type ATPases have 2 components, F(1) - the catalytic core - and F(0) - the membrane proton channel. F(1) has five subunits: alpha(3), beta(3), gamma(1), delta(1), epsilon(1). F(0) has three main subunits: a(1), b(2) and c(10-14). The alpha and beta chains form an alternating ring which encloses part of the gamma chain. F(1) is attached to F(0) by a central stalk formed by the gamma and epsilon chains, while a peripheral stalk is formed by the delta and b chains.

It localises to the cell inner membrane. F(1)F(0) ATP synthase produces ATP from ADP in the presence of a proton or sodium gradient. F-type ATPases consist of two structural domains, F(1) containing the extramembraneous catalytic core and F(0) containing the membrane proton channel, linked together by a central stalk and a peripheral stalk. During catalysis, ATP synthesis in the catalytic domain of F(1) is coupled via a rotary mechanism of the central stalk subunits to proton translocation. In terms of biological role, this protein is part of the stalk that links CF(0) to CF(1). It either transmits conformational changes from CF(0) to CF(1) or is implicated in proton conduction. This Zymomonas mobilis subsp. mobilis (strain ATCC 31821 / ZM4 / CP4) protein is ATP synthase subunit delta.